Reading from the N-terminus, the 78-residue chain is RNA-binding protein KhpA (78 aa).

A KH domain is found at 29–78; it reads TIIYELTVAKGDIGKIIGKEGRTIKAIRTLLVSVASRDNVKVSLEIMEER.

The protein belongs to the KhpA RNA-binding protein family.

Its subcellular location is the cytoplasm. Its function is as follows. A probable RNA-binding protein. The polypeptide is RNA-binding protein KhpA (Chlamydia trachomatis serovar D (strain ATCC VR-885 / DSM 19411 / UW-3/Cx)).